Reading from the N-terminus, the 214-residue chain is Probable nicotinate-nucleotide adenylyltransferase (214 aa).

This sequence belongs to the NadD family.

The catalysed reaction is nicotinate beta-D-ribonucleotide + ATP + H(+) = deamido-NAD(+) + diphosphate. Its pathway is cofactor biosynthesis; NAD(+) biosynthesis; deamido-NAD(+) from nicotinate D-ribonucleotide: step 1/1. Catalyzes the reversible adenylation of nicotinate mononucleotide (NaMN) to nicotinic acid adenine dinucleotide (NaAD). This is Probable nicotinate-nucleotide adenylyltransferase from Aeromonas hydrophila subsp. hydrophila (strain ATCC 7966 / DSM 30187 / BCRC 13018 / CCUG 14551 / JCM 1027 / KCTC 2358 / NCIMB 9240 / NCTC 8049).